The following is a 315-amino-acid chain: Protein-L-isoaspartate O-methyltransferase (315 aa).

2 disordered regions span residues 1-47 (MSGE…KPAA) and 59-89 (RALP…AAPK). Residues 14-34 (EDLKRAPRKSEVRSGSGERHA) show a composition bias toward basic and acidic residues. Low complexity-rich tracts occupy residues 35–47 (ASAV…KPAA) and 59–81 (RALP…LKPA). The active site involves S162.

The protein belongs to the methyltransferase superfamily. L-isoaspartyl/D-aspartyl protein methyltransferase family.

The protein localises to the cytoplasm. It carries out the reaction [protein]-L-isoaspartate + S-adenosyl-L-methionine = [protein]-L-isoaspartate alpha-methyl ester + S-adenosyl-L-homocysteine. Functionally, catalyzes the methyl esterification of L-isoaspartyl residues in peptides and proteins that result from spontaneous decomposition of normal L-aspartyl and L-asparaginyl residues. It plays a role in the repair and/or degradation of damaged proteins. This chain is Protein-L-isoaspartate O-methyltransferase, found in Burkholderia ambifaria (strain MC40-6).